The chain runs to 126 residues: UPF0538 protein C2orf76 (126 aa).

It belongs to the UPF0538 family.

This is UPF0538 protein C2orf76 (C2orf76) from Homo sapiens (Human).